A 147-amino-acid chain; its full sequence is Large ribosomal subunit protein uL13 (147 aa).

It belongs to the universal ribosomal protein uL13 family. Part of the 50S ribosomal subunit.

In terms of biological role, this protein is one of the early assembly proteins of the 50S ribosomal subunit, although it is not seen to bind rRNA by itself. It is important during the early stages of 50S assembly. This chain is Large ribosomal subunit protein uL13, found in Streptomyces griseus subsp. griseus (strain JCM 4626 / CBS 651.72 / NBRC 13350 / KCC S-0626 / ISP 5235).